We begin with the raw amino-acid sequence, 490 residues long: MSDVQVHQLYIHGRYVEATSGKTFNSINPANGEIIATLQQASEQDIEAAVKSAQQGQKIWAAMTAMERSRILRRAVDILRERNDELARLETLDTGKAYSETSTVDIVTGADVLEYYAGLATAIQGEQVPLRESSFFYTRREPLGVVAGIGAWNYPIQIALWKSAPALAAGNAMIFKPSETTPLTALKLAEIYTEAGLPDGVFNVVQGAGREIGQWLTEHPVIEKISFTGGVETGKKVMASAAGSTLKEVTMELGGKSPLIICEDADLNRAADIAVMANFFSSGQVCTNGTRVFVPKSRLADFEKAVVERVKRILIGDPMAEDTNFGPLTSFPHMEKVLSFIESGKQQGAKVLIGGGRATEGELAKGAYVLPTVFSDCTDQMAIVQEEIFGPVMSILGYETEEEVIQRANDTTFGLAAGVVTQDISRAHRIIHQIEAGICWINTWGESPAEMPVGGYKQSGVGRENGLTTLGHYTRIKSIQVELGDYQGIF.

Residues S26, I27, and D93 each contribute to the K(+) site. Position 150-152 (150-152 (GAW)) interacts with NAD(+). K162 (charge relay system) is an active-site residue. NAD(+)-binding positions include 176–179 (KPSE) and 230–233 (GVET). L246 serves as a coordination point for K(+). The active-site Proton acceptor is the E252. G254, C286, and E387 together coordinate NAD(+). C286 (nucleophile) is an active-site residue. Residue C286 is modified to Cysteine sulfenic acid (-SOH). K(+)-binding residues include K457 and G460. E464 (charge relay system) is an active-site residue.

The protein belongs to the aldehyde dehydrogenase family. As to quaternary structure, dimer of dimers. Requires K(+) as cofactor.

It catalyses the reaction betaine aldehyde + NAD(+) + H2O = glycine betaine + NADH + 2 H(+). It participates in amine and polyamine biosynthesis; betaine biosynthesis via choline pathway; betaine from betaine aldehyde: step 1/1. Functionally, involved in the biosynthesis of the osmoprotectant glycine betaine. Catalyzes the irreversible oxidation of betaine aldehyde to the corresponding acid. The protein is Betaine aldehyde dehydrogenase of Acinetobacter baumannii (strain SDF).